The sequence spans 431 residues: 3-deoxy-D-manno-octulosonic acid transferase (431 aa).

Residues 5-27 form a helical; Signal-anchor membrane-spanning segment; it reads WLTSRLYDAFLVCAFFVSAPRIF. Residue Glu-67 is the Proton acceptor of the active site. CMP contacts are provided by residues 275–276, 315–317, and 342–345; these read PR, MGV, and NLLE.

Belongs to the glycosyltransferase group 1 family. Glycosyltransferase 30 subfamily.

It localises to the cell inner membrane. It catalyses the reaction lipid IVA (E. coli) + CMP-3-deoxy-beta-D-manno-octulosonate = alpha-Kdo-(2-&gt;6)-lipid IVA (E. coli) + CMP + H(+). The enzyme catalyses alpha-Kdo-(2-&gt;6)-lipid IVA (E. coli) + CMP-3-deoxy-beta-D-manno-octulosonate = alpha-Kdo-(2-&gt;4)-alpha-Kdo-(2-&gt;6)-lipid IVA (E. coli) + CMP + H(+). The catalysed reaction is alpha-Kdo-(2-&gt;4)-alpha-Kdo-(2-&gt;6)-lipid IVA (E. coli) + CMP-3-deoxy-beta-D-manno-octulosonate = alpha-Kdo-(2-&gt;8)-alpha-Kdo-(2-&gt;4)-alpha-Kdo-(2-&gt;6)-lipid IVA (E. coli) + CMP + H(+). It participates in bacterial outer membrane biogenesis; LPS core biosynthesis. Involved in lipopolysaccharide (LPS) biosynthesis. Catalyzes the transfer of three 3-deoxy-D-manno-octulosonate (Kdo) residues from CMP-Kdo to lipid IV(A), the tetraacyldisaccharide-1,4'-bisphosphate precursor of lipid A. Thus generates the genus-specific LPS epitope of Chlamydia, composed of the trisaccharide alpha-Kdo-(2-&gt;8)-alpha-Kdo-(2-&gt;4)-alpha-Kdo. This is 3-deoxy-D-manno-octulosonic acid transferase (waaA) from Chlamydia trachomatis serovar A (strain ATCC VR-571B / DSM 19440 / HAR-13).